The sequence spans 208 residues: Ribosomal RNA large subunit methyltransferase E (208 aa).

5 residues coordinate S-adenosyl-L-methionine: Gly62, Trp64, Asp82, Asp98, and Asp123. Lys163 acts as the Proton acceptor in catalysis.

It belongs to the class I-like SAM-binding methyltransferase superfamily. RNA methyltransferase RlmE family.

Its subcellular location is the cytoplasm. The enzyme catalyses uridine(2552) in 23S rRNA + S-adenosyl-L-methionine = 2'-O-methyluridine(2552) in 23S rRNA + S-adenosyl-L-homocysteine + H(+). Functionally, specifically methylates the uridine in position 2552 of 23S rRNA at the 2'-O position of the ribose in the fully assembled 50S ribosomal subunit. This is Ribosomal RNA large subunit methyltransferase E from Actinobacillus succinogenes (strain ATCC 55618 / DSM 22257 / CCUG 43843 / 130Z).